A 246-amino-acid chain; its full sequence is Protein YIPF4 (246 aa).

The Cytoplasmic segment spans residues 1-115 (MQPPGPPPAY…FNRQVVRDNP (115 aa)). Residues 116–136 (DFWGPLAVVLFFSMISLYGQF) form a helical membrane-spanning segment. Topologically, residues 137-140 (RVVS) are lumenal. Residues 141–161 (WIITIWIFGSLTIFLLARVLG) traverse the membrane as a helical segment. Residues 162-168 (GEVAYGQ) are Cytoplasmic-facing. The chain crosses the membrane as a helical span at residues 169 to 189 (VLGVIGYSLLPLIVIAPILLV). The Lumenal segment spans residues 190-197 (VGSFEMVS). A helical membrane pass occupies residues 198–218 (TLIKLFGVFWAAYSAASLLVG). Over 219–225 (EEFKTKK) the chain is Cytoplasmic. A helical membrane pass occupies residues 226-246 (PLLIYPIFLLYIYFLSLYTGV).

It belongs to the YIP1 family. Interacts with YIPF3 and YIPF5.

The protein resides in the golgi apparatus. It localises to the cis-Golgi network membrane. Its function is as follows. Involved in the maintenance of the Golgi structure. This is Protein YIPF4 (Yipf4) from Mus musculus (Mouse).